Here is a 520-residue protein sequence, read N- to C-terminus: Target of rapamycin complex 2 subunit MAPKAP1 (520 aa).

The region spanning 139-267 is the CRIM domain; it reads QSILSVRLEQ…GFSTLALVEK (129 aa). Positions 279-353 are SIN1-type RBD; that stretch reads LFVRINAAHG…QNSLEFCLVR (75 aa). The disordered stretch occupies residues 310–333; it reads KRRKGSQRNSGPQYRLEKQSQPNV. The SIN1-type PH domain occupies 382–487; that stretch reads QYKSFKVSMI…IVLKVNYILE (106 aa). 3 residues coordinate a 1,2-diacyl-sn-glycero-3-phospho-(1D-myo-inositol-3,4,5-trisphosphate): R393, K428, and K464.

This sequence belongs to the SIN1 family. In terms of assembly, component of the mechanistic target of rapamycin complex 2 (mTORC2), consisting in two heterotretramers composed of MTOR, MLST8, RICTOR and MAPKAP1/SIN1. Contrary to mTORC1, mTORC2 does not bind to and is not sensitive to FKBP12-rapamycin.

It is found in the cell membrane. The protein resides in the endoplasmic reticulum membrane. It localises to the early endosome membrane. Its subcellular location is the late endosome membrane. The protein localises to the lysosome membrane. It is found in the golgi apparatus membrane. The protein resides in the mitochondrion outer membrane. It localises to the cytoplasm. Its subcellular location is the perinuclear region. The protein localises to the nucleus. Its activity is regulated as follows. Phosphatidylinositol 3,4,5-trisphosphate (PI(3,4,5)P3) promotes MTOR activation by relieving MAPKAP1/SIN1-mediated inhibition of MTOR that takes place in absence of PI(3,4,5)P3. Functionally, component of the mechanistic target of rapamycin complex 2 (mTORC2), which transduces signals from growth factors to pathways involved in proliferation, cytoskeletal organization, lipogenesis and anabolic output. In response to growth factors, mTORC2 phosphorylates and activates AGC protein kinase family members, including AKT (AKT1, AKT2 and AKT3), PKC (PRKCA, PRKCB and PRKCE) and SGK1. In contrast to mTORC1, mTORC2 is nutrient-insensitive. Within the mTORC2 complex, MAPKAP1/SIN1 acts as a substrate adapter which recognizes and binds AGC protein kinase family members for phosphorylation by MTOR. This is Target of rapamycin complex 2 subunit MAPKAP1 (mapkap1) from Xenopus tropicalis (Western clawed frog).